Reading from the N-terminus, the 341-residue chain is Putative casein kinase I C03C10.2 (341 aa).

Residues 50–326 (WSIEGVIGNG…KCLYSPKSLL (277 aa)) enclose the Protein kinase domain. ATP is bound by residues 56 to 64 (IGNGGYGQI) and K79. D173 acts as the Proton acceptor in catalysis.

The protein belongs to the protein kinase superfamily. CK1 Ser/Thr protein kinase family. Casein kinase I subfamily.

It catalyses the reaction L-seryl-[protein] + ATP = O-phospho-L-seryl-[protein] + ADP + H(+). The enzyme catalyses L-threonyl-[protein] + ATP = O-phospho-L-threonyl-[protein] + ADP + H(+). This is Putative casein kinase I C03C10.2 from Caenorhabditis elegans.